We begin with the raw amino-acid sequence, 277 residues long: MTKADAVAKQAQDYYDSGSADGFYYRIWGGEDLHIGIYNTPDEPIYDASVRTVSRICDKIKNWPAGTKVLDLGAGYGGSARYMAKHHGFDVDCLNISLVQNERNRQMNQEQGLADKIRVFDGSFEELPFENKSYDVLWSQDSILHSGNRRKVMEEADRVLKSGGDFVFTDPMQTDNCPEGVLEPVLARIHLDSLGSVGFYRQVAEELGWEFVEFDEQTHQLVNHYSRVLQELEAHYDQLQPECSQEYLDRMKVGLNHWINAGKSGYMAWGILKFHKP.

Belongs to the methyltransferase superfamily. In terms of assembly, monomer.

It carries out the reaction sarcosine + 2 S-adenosyl-L-methionine = glycine betaine + 2 S-adenosyl-L-homocysteine + 2 H(+). It catalyses the reaction sarcosine + S-adenosyl-L-methionine = N,N-dimethylglycine + S-adenosyl-L-homocysteine + H(+). The enzyme catalyses N,N-dimethylglycine + S-adenosyl-L-methionine = glycine betaine + S-adenosyl-L-homocysteine + H(+). It functions in the pathway amine and polyamine biosynthesis; betaine biosynthesis via glycine pathway; betaine from glycine: step 2/3. The protein operates within amine and polyamine biosynthesis; betaine biosynthesis via glycine pathway; betaine from glycine: step 3/3. With respect to regulation, inhibited by n-butylic acid and S-adenosyl-L-homocysteine. Its function is as follows. Catalyzes the methylation of sarcosine and dimethylglycine to dimethylglycine and betaine, respectively, with S-adenosylmethionine (AdoMet) acting as the methyl donor. Activity with sarcosine is much weaker than activity with dimethylglycine. In Aphanothece halophytica, this protein is Sarcosine/dimethylglycine N-methyltransferase.